Consider the following 47-residue polypeptide: Large ribosomal subunit protein bL34 (47 aa).

This sequence belongs to the bacterial ribosomal protein bL34 family.

In Mycobacterium avium (strain 104), this protein is Large ribosomal subunit protein bL34.